Consider the following 435-residue polypeptide: 3-ketoacyl-CoA thiolase (435 aa).

Cys-98 serves as the catalytic Acyl-thioester intermediate. Active-site proton acceptor residues include His-391 and Cys-421.

Belongs to the thiolase-like superfamily. Thiolase family. In terms of assembly, heterotetramer of two alpha chains (FadJ) and two beta chains (FadI).

It localises to the cytoplasm. The enzyme catalyses an acyl-CoA + acetyl-CoA = a 3-oxoacyl-CoA + CoA. It functions in the pathway lipid metabolism; fatty acid beta-oxidation. Its function is as follows. Catalyzes the final step of fatty acid oxidation in which acetyl-CoA is released and the CoA ester of a fatty acid two carbons shorter is formed. The polypeptide is 3-ketoacyl-CoA thiolase (Vibrio cholerae serotype O1 (strain ATCC 39541 / Classical Ogawa 395 / O395)).